The primary structure comprises 254 residues: 5-oxoprolinase subunit A (254 aa).

Belongs to the LamB/PxpA family. In terms of assembly, forms a complex composed of PxpA, PxpB and PxpC.

It catalyses the reaction 5-oxo-L-proline + ATP + 2 H2O = L-glutamate + ADP + phosphate + H(+). Its function is as follows. Catalyzes the cleavage of 5-oxoproline to form L-glutamate coupled to the hydrolysis of ATP to ADP and inorganic phosphate. This is 5-oxoprolinase subunit A from Burkholderia ambifaria (strain MC40-6).